The primary structure comprises 238 residues: Probable transcriptional regulatory protein SZO_02930 (238 aa).

The protein belongs to the TACO1 family. YeeN subfamily.

It localises to the cytoplasm. This is Probable transcriptional regulatory protein SZO_02930 from Streptococcus equi subsp. zooepidemicus (strain H70).